The primary structure comprises 344 residues: FCS-Like Zinc finger 10 (344 aa).

Residues 270-314 (DFLSFCYGCSKKLGMGEDIYMYSGYKAFCSSECRSKEIDLDEEME) form an FLZ-type zinc finger. Residues 309-320 (LDEEMEDGDEEE) show a composition bias toward acidic residues. Residues 309 to 344 (LDEEMEDGDEEEAIKSVSSSDKESKKKSNGVFFTVG) form a disordered region.

The protein belongs to the FLZ family. Interacts with KIN10 and KIN11 via its FLZ-type zinc finger domain. Interacts with KINB1, KINB2 and KINB3 via its N-terminal part. Forms homodimer and heterodimer with FLZ2 and FLZ12 in vitro. In terms of tissue distribution, early expressed in hypocotyl and cotyledon and preferentially in the stelar region of the shoot and root. Later expressed in root-shoot junction, lateral root, old or senescing leaves and in pistil and pollen of flower buds or open flowers.

Its subcellular location is the cytoplasm. The protein localises to the nucleus. It localises to the endoplasmic reticulum. Functionally, may act as an adapter to facilitate the interaction of SnRK1 complex with effector proteins, conferring tissue- and stimulus-type specific differences in the SnRK1 regulation pathway. Negatively regulates KIN10 leading to a repression of the SnRK1 signaling pathway. This Arabidopsis thaliana (Mouse-ear cress) protein is FCS-Like Zinc finger 10.